A 91-amino-acid polypeptide reads, in one-letter code: MGLLRLLRGNKASAPVARERLQILLAHERGMRGQPDLLGVLREEILAVVSKHVTLDPTKVIVRLERGDEVSTLEVDIEVPNDLERKRVAVA.

Belongs to the MinE family.

Prevents the cell division inhibition by proteins MinC and MinD at internal division sites while permitting inhibition at polar sites. This ensures cell division at the proper site by restricting the formation of a division septum at the midpoint of the long axis of the cell. The chain is Cell division topological specificity factor from Bradyrhizobium diazoefficiens (strain JCM 10833 / BCRC 13528 / IAM 13628 / NBRC 14792 / USDA 110).